A 203-amino-acid polypeptide reads, in one-letter code: Probable host range protein 2-3 (203 aa).

Positions 182 to 203 (LEEEDEEKIADTGNDNQKDAED) are disordered.

It belongs to the poxviridae C7 protein family.

In terms of biological role, plays a role for multiplication of the virus in different cell types. The protein is Probable host range protein 2-3 of Myxoma virus (strain Lausanne) (MYXV).